The sequence spans 569 residues: 3-(3-hydroxy-phenyl)propionate/3-hydroxycinnamic acid hydroxylase (569 aa).

FAD is bound by residues Asp12–Glu41 and Phe277–Asp287.

This sequence belongs to the PheA/TfdB FAD monooxygenase family. It depends on FAD as a cofactor.

The enzyme catalyses 3-(3-hydroxyphenyl)propanoate + NADH + O2 + H(+) = 3-(2,3-dihydroxyphenyl)propanoate + NAD(+) + H2O. The catalysed reaction is (2E)-3-(3-hydroxyphenyl)prop-2-enoate + NADH + O2 + H(+) = (2E)-3-(2,3-dihydroxyphenyl)prop-2-enoate + NAD(+) + H2O. It functions in the pathway aromatic compound metabolism; 3-phenylpropanoate degradation. In terms of biological role, catalyzes the insertion of one atom of molecular oxygen into position 2 of the phenyl ring of 3-(3-hydroxyphenyl)propionate (3-HPP) and hydroxycinnamic acid (3HCI). In Mycolicibacterium vanbaalenii (strain DSM 7251 / JCM 13017 / BCRC 16820 / KCTC 9966 / NRRL B-24157 / PYR-1) (Mycobacterium vanbaalenii), this protein is 3-(3-hydroxy-phenyl)propionate/3-hydroxycinnamic acid hydroxylase.